Here is a 488-residue protein sequence, read N- to C-terminus: Cobyric acid synthase (488 aa).

One can recognise a GATase cobBQ-type domain in the interval 248 to 435 (VLKVVVPVLP…LHGLFESPAA (188 aa)). Cys329 serves as the catalytic Nucleophile. Residue His427 is part of the active site.

It belongs to the CobB/CobQ family. CobQ subfamily.

It functions in the pathway cofactor biosynthesis; adenosylcobalamin biosynthesis. Catalyzes amidations at positions B, D, E, and G on adenosylcobyrinic A,C-diamide. NH(2) groups are provided by glutamine, and one molecule of ATP is hydrogenolyzed for each amidation. This Pseudomonas fluorescens (strain Pf0-1) protein is Cobyric acid synthase.